The primary structure comprises 317 residues: L-lactate dehydrogenase (317 aa).

Residues 16 to 17 (FV), Asp-38, Lys-43, Tyr-69, and 83 to 84 (GA) each bind NAD(+). 2 residues coordinate substrate: Gln-86 and Arg-92. Residues Ser-105, 122–124 (ATN), and Ser-147 each bind NAD(+). 124–127 (NPVD) serves as a coordination point for substrate. 152-155 (DTAR) is a binding site for substrate. Residues Arg-157 and 169–172 (QNVH) each bind beta-D-fructose 1,6-bisphosphate. Catalysis depends on His-179, which acts as the Proton acceptor. At Tyr-224 the chain carries Phosphotyrosine. Thr-233 provides a ligand contact to substrate.

This sequence belongs to the LDH/MDH superfamily. LDH family. As to quaternary structure, exists as a dimer and a tetramer (dimer of dimers). The conversion occurs via the binding of fructose 1,6-bisphosphate (FBP) to the dimer.

The protein resides in the cytoplasm. It catalyses the reaction (S)-lactate + NAD(+) = pyruvate + NADH + H(+). It functions in the pathway fermentation; pyruvate fermentation to lactate; (S)-lactate from pyruvate: step 1/1. Allosterically activated by fructose 1,6-bisphosphate (FBP). The improvement in affinity for substrate occurs in two steps; the binding of fructose 1,6-bisphosphate (FBP) to the dimer, and the dimer to tetramer conversion. Its function is as follows. Catalyzes the conversion of lactate to pyruvate. The chain is L-lactate dehydrogenase from Geobacillus stearothermophilus (Bacillus stearothermophilus).